The following is a 201-amino-acid chain: Small ribosomal subunit protein uS4 (201 aa).

The disordered stretch occupies residues 1–38 (MARYTGPATRKSRRLGVDLVGGDQSFEKRPYPPGQHGR). The region spanning 91-157 (SRLDNVVYRA…DPFVIARETA (67 aa)) is the S4 RNA-binding domain.

The protein belongs to the universal ribosomal protein uS4 family. In terms of assembly, part of the 30S ribosomal subunit. Contacts protein S5. The interaction surface between S4 and S5 is involved in control of translational fidelity.

In terms of biological role, one of the primary rRNA binding proteins, it binds directly to 16S rRNA where it nucleates assembly of the body of the 30S subunit. Functionally, with S5 and S12 plays an important role in translational accuracy. The sequence is that of Small ribosomal subunit protein uS4 from Mycobacterium sp. (strain JLS).